A 479-amino-acid polypeptide reads, in one-letter code: Ribulose bisphosphate carboxylase large chain (479 aa).

A propeptide spanning residues 1-2 (MS) is cleaved from the precursor. 2 residues coordinate substrate: asparagine 123 and threonine 173. The active-site Proton acceptor is the lysine 175. Substrate is bound at residue lysine 177. Residues lysine 201, aspartate 203, and glutamate 204 each coordinate Mg(2+). The residue at position 201 (lysine 201) is an N6-carboxylysine. Serine 208 bears the Phosphoserine mark. Catalysis depends on histidine 294, which acts as the Proton acceptor. Positions 295 and 327 each coordinate substrate. A Phosphothreonine modification is found at threonine 330. Serine 379 serves as a coordination point for substrate.

Belongs to the RuBisCO large chain family. Type I subfamily. As to quaternary structure, heterohexadecamer of 8 large chains and 8 small chains; disulfide-linked. The disulfide link is formed within the large subunit homodimers. Mg(2+) serves as cofactor. In terms of processing, the disulfide bond which can form in the large chain dimeric partners within the hexadecamer appears to be associated with oxidative stress and protein turnover.

The protein resides in the plastid. It localises to the chloroplast. The enzyme catalyses 2 (2R)-3-phosphoglycerate + 2 H(+) = D-ribulose 1,5-bisphosphate + CO2 + H2O. The catalysed reaction is D-ribulose 1,5-bisphosphate + O2 = 2-phosphoglycolate + (2R)-3-phosphoglycerate + 2 H(+). RuBisCO catalyzes two reactions: the carboxylation of D-ribulose 1,5-bisphosphate, the primary event in carbon dioxide fixation, as well as the oxidative fragmentation of the pentose substrate in the photorespiration process. Both reactions occur simultaneously and in competition at the same active site. The protein is Ribulose bisphosphate carboxylase large chain of Olimarabidopsis pumila (Dwarf rocket).